A 307-amino-acid polypeptide reads, in one-letter code: Elongation factor Ts (307 aa).

The interval Thr80–Val83 is involved in Mg(2+) ion dislocation from EF-Tu.

Belongs to the EF-Ts family.

The protein resides in the cytoplasm. In terms of biological role, associates with the EF-Tu.GDP complex and induces the exchange of GDP to GTP. It remains bound to the aminoacyl-tRNA.EF-Tu.GTP complex up to the GTP hydrolysis stage on the ribosome. The sequence is that of Elongation factor Ts from Xanthobacter autotrophicus (strain ATCC BAA-1158 / Py2).